We begin with the raw amino-acid sequence, 690 residues long: Calpain-9 (690 aa).

A disordered region spans residues 1–24 (MPYLHRSLRPQPQPVPRDARTVHS). One can recognise a Calpain catalytic domain in the interval 42–337 (LFEDADFPAS…FDKVEICNLT (296 aa)). Positions 81, 83, and 88 each coordinate Ca(2+). Residue Cys97 is part of the active site. Glu167 contacts Ca(2+). Residues His254 and Asn278 contribute to the active site. Glu284, Asp291, Leu312, Asp314, and Glu316 together coordinate Ca(2+). The domain III stretch occupies residues 338 to 521 (PDALEDNTLH…PQEEETEEER (184 aa)). Positions 522 to 690 (QFRALFRRIA…NEFINLTMNI (169 aa)) are domain IV. 3 EF-hand domains span residues 534 to 552 (DMEV…VLQK), 561 to 589 (LSLL…FRVF), and 591 to 626 (DKLR…AGFQ). Asp574, Ser576, Asn578, Lys580, Glu585, Asp604, Asp606, Ser608, Thr610, and Glu615 together coordinate Ca(2+).

Belongs to the peptidase C2 family. As to expression, predominantly expressed in stomach and small intestine, although low levels of expression in other organs.

Functionally, calcium-regulated non-lysosomal thiol-protease. In Rattus norvegicus (Rat), this protein is Calpain-9 (Capn9).